Consider the following 212-residue polypeptide: N-(5'-phosphoribosyl)anthranilate isomerase (212 aa).

It belongs to the TrpF family.

It carries out the reaction N-(5-phospho-beta-D-ribosyl)anthranilate = 1-(2-carboxyphenylamino)-1-deoxy-D-ribulose 5-phosphate. The protein operates within amino-acid biosynthesis; L-tryptophan biosynthesis; L-tryptophan from chorismate: step 3/5. This Microcystis aeruginosa (strain NIES-843 / IAM M-2473) protein is N-(5'-phosphoribosyl)anthranilate isomerase.